Consider the following 105-residue polypeptide: Guanyl-specific ribonuclease Ms (105 aa).

Intrachain disulfides connect C3–C11 and C7–C102. Residue H39 is part of the active site. The active-site Proton acceptor is E57. H91 serves as the catalytic Proton donor.

The protein belongs to the ribonuclease N1/T1 family.

It carries out the reaction [RNA] containing guanosine + H2O = an [RNA fragment]-3'-guanosine-3'-phosphate + a 5'-hydroxy-ribonucleotide-3'-[RNA fragment].. This is Guanyl-specific ribonuclease Ms from Aspergillus phoenicis (Aspergillus saitoi).